The sequence spans 283 residues: Bifunctional protein FolD (283 aa).

Residues Gly166–Ser168, Ser191, and Ile232 each bind NADP(+).

The protein belongs to the tetrahydrofolate dehydrogenase/cyclohydrolase family. Homodimer.

It catalyses the reaction (6R)-5,10-methylene-5,6,7,8-tetrahydrofolate + NADP(+) = (6R)-5,10-methenyltetrahydrofolate + NADPH. It carries out the reaction (6R)-5,10-methenyltetrahydrofolate + H2O = (6R)-10-formyltetrahydrofolate + H(+). It functions in the pathway one-carbon metabolism; tetrahydrofolate interconversion. In terms of biological role, catalyzes the oxidation of 5,10-methylenetetrahydrofolate to 5,10-methenyltetrahydrofolate and then the hydrolysis of 5,10-methenyltetrahydrofolate to 10-formyltetrahydrofolate. The chain is Bifunctional protein FolD from Chromobacterium violaceum (strain ATCC 12472 / DSM 30191 / JCM 1249 / CCUG 213 / NBRC 12614 / NCIMB 9131 / NCTC 9757 / MK).